We begin with the raw amino-acid sequence, 209 residues long: Probable glutathione peroxidase 8-A (209 aa).

The helical transmembrane segment at 18–40 threads the bilayer; sequence VSVVFLSMLLCTGILCVLQLGFL. Cys79 is a catalytic residue.

This sequence belongs to the glutathione peroxidase family.

The protein resides in the membrane. The enzyme catalyses 2 glutathione + H2O2 = glutathione disulfide + 2 H2O. In Xenopus laevis (African clawed frog), this protein is Probable glutathione peroxidase 8-A (gpx8-a).